Here is a 554-residue protein sequence, read N- to C-terminus: Phospho-2-dehydro-3-deoxyheptonate aldolase 1, chloroplastic (554 aa).

A chloroplast-targeting transit peptide spans 1–39 (MSLATSSSMAGGAAVVPRSATATTASAFVTMKRRATAVR). The segment at 41-70 (VHAAEPSKNPPVGVPSAAKTSSPSVAAPEK) is disordered.

Belongs to the class-II DAHP synthase family.

It localises to the plastid. The protein localises to the chloroplast. It catalyses the reaction D-erythrose 4-phosphate + phosphoenolpyruvate + H2O = 7-phospho-2-dehydro-3-deoxy-D-arabino-heptonate + phosphate. The protein operates within metabolic intermediate biosynthesis; chorismate biosynthesis; chorismate from D-erythrose 4-phosphate and phosphoenolpyruvate: step 1/7. The protein is Phospho-2-dehydro-3-deoxyheptonate aldolase 1, chloroplastic (DAHPS1) of Oryza sativa subsp. japonica (Rice).